Here is a 389-residue protein sequence, read N- to C-terminus: MGSSEMEKSGKEKEPKTTPPSTSSSAPATVVSQEPSSAVSAGVAVTQDWSGFQAYSPMPPHGYVASSPQPHPYMWGVQHMMPPYGTPPHPYVTMYPPGGMYAHPSLPPGSYPYSPYAMPSPNGMAEASGNTGSVIEGDGKPSDGKEKLPIKRSKGSLGSLNMIIGKNNEAGKNSGASANGACSKSAESGSDGSSDGSDANSQNDSGSRHNGKDGETASESGGSAHGPPRNGSNLPVNQTVAIMPVSATGVPGPPTNLNIGMDYWSGHGNVSGAVPGVVVDGSQSQPWLQVSDEREIKRQRRKQSNRESARRSRLRKQAECDELAQRAEVLNGENSSLRAEINKLKSQYEELLAENSSLKNKFSSAPSLEGGDLDKNEQEPQRSTRQDVA.

Over residues 1-16 (MGSSEMEKSGKEKEPK) the composition is skewed to basic and acidic residues. Disordered regions lie at residues 1-42 (MGSS…VSAG), 124-154 (MAEASGNTGSVIEGDGKPSDGKEKLPIKRSK), 170-236 (AGKN…NLPV), 285-318 (QPWLQVSDEREIKRQRRKQSNRESARRSRLRKQA), and 356-389 (SSLKNKFSSAPSLEGGDLDKNEQEPQRSTRQDVA). Residues 19–32 (PPSTSSSAPATVVS) are compositionally biased toward low complexity. A compositionally biased stretch (basic and acidic residues) spans 137–149 (GDGKPSDGKEKLP). Lys154 participates in a covalent cross-link: Glycyl lysine isopeptide (Lys-Gly) (interchain with G-Cter in ubiquitin). A compositionally biased stretch (low complexity) spans 170-205 (AGKNSGASANGACSKSAESGSDGSSDGSDANSQNDS). 2 stretches are compositionally biased toward basic and acidic residues: residues 206–215 (GSRHNGKDGE) and 304–318 (SNRESARRSRLRKQA). The bZIP domain maps to 295–358 (EIKRQRRKQS…EELLAENSSL (64 aa)). The segment at 297-316 (KRQRRKQSNRESARRSRLRK) is basic motif. A leucine-zipper region spans residues 323 to 358 (LAQRAEVLNGENSSLRAEINKLKSQYEELLAENSSL). The span at 356–366 (SSLKNKFSSAP) shows a compositional bias: polar residues. A compositionally biased stretch (basic and acidic residues) spans 372-389 (DLDKNEQEPQRSTRQDVA).

The protein belongs to the bZIP family. As to quaternary structure, monomer, homodimer and heterodimers with GBF1/BZIP41, GBF2/BZIP54 and GBF3/BZIP55. Heterodimers with BZIP16. Interacts with GIP1.

It is found in the nucleus. Functionally, transcriptional activator that binds to the G-box motif (5'-CACGTG-3') and other cis-acting elements with 5'-ACGT-3' core, such as Hex, C-box and as-1 motifs. Possesses high binding affinity to G-box, much lower affinity to Hex and C-box, and little affinity to as-1 element. G-box and G-box-like motifs are cis-acting elements defined in promoters of certain plant genes which are regulated by such diverse stimuli as light-induction or hormone control. Binds to the G-box motif 5'-CACGTG-3' of LHCB2.4 (At3g27690) promoter. May act as transcriptional activator in light-regulated expression of LHCB2.4. Probably binds DNA as monomer. DNA-binding activity is redox-dependent. The protein is bZIP transcription factor 68 of Arabidopsis thaliana (Mouse-ear cress).